The sequence spans 371 residues: GDP-mannose 3,5-epimerase 2 (371 aa).

Residues 29–55 (GAGG…SDWK), Asp53, and Asp73 each bind NAD(+). Residues Gly98 and 138–140 (SAC) each bind substrate. Residues Tyr168 and Lys172 each coordinate NAD(+). Tyr168 acts as the Proton acceptor in catalysis. Residues Asn197, 210-212 (EKA), Lys219, 235-237 (QTR), Arg300, and Ser350 each bind substrate.

The protein belongs to the NAD(P)-dependent epimerase/dehydratase family. NAD(+) is required as a cofactor.

It carries out the reaction GDP-alpha-D-mannose = GDP-beta-L-gulose. The enzyme catalyses GDP-beta-L-gulose = GDP-beta-L-galactose. It functions in the pathway cofactor biosynthesis; L-ascorbate biosynthesis via GDP-alpha-D-mannose pathway; L-ascorbate from GDP-alpha-D-mannose: step 1/5. Catalyzes a reversible epimerization of GDP-D-mannose that precedes the committed step in the biosynthesis of vitamin C (L-ascorbate), resulting in the hydrolysis of the highly energetic glycosyl-pyrophosphoryl linkage. Able to catalyze 2 distinct epimerization reactions and can release both GDP-L-galactose and GDP-L-gulose from GDP-mannose. The chain is GDP-mannose 3,5-epimerase 2 (GME-2) from Oryza sativa subsp. japonica (Rice).